The sequence spans 436 residues: Xylose isomerase (436 aa).

Catalysis depends on residues His100 and Asp103. Glu231, Glu267, His270, Asp295, Asp306, Asp308, and Asp338 together coordinate Mg(2+).

It belongs to the xylose isomerase family. As to quaternary structure, homotetramer. Mg(2+) is required as a cofactor.

Its subcellular location is the cytoplasm. The enzyme catalyses alpha-D-xylose = alpha-D-xylulofuranose. The protein is Xylose isomerase of Rhizobium johnstonii (strain DSM 114642 / LMG 32736 / 3841) (Rhizobium leguminosarum bv. viciae).